The chain runs to 203 residues: Small ribosomal subunit protein uS4 (203 aa).

Positions 93 to 156 (RRLDNVVYRL…MKVPAILEAV (64 aa)) constitute an S4 RNA-binding domain.

It belongs to the universal ribosomal protein uS4 family. In terms of assembly, part of the 30S ribosomal subunit. Contacts protein S5. The interaction surface between S4 and S5 is involved in control of translational fidelity.

Its function is as follows. One of the primary rRNA binding proteins, it binds directly to 16S rRNA where it nucleates assembly of the body of the 30S subunit. With S5 and S12 plays an important role in translational accuracy. This Streptococcus uberis (strain ATCC BAA-854 / 0140J) protein is Small ribosomal subunit protein uS4.